Here is a 638-residue protein sequence, read N- to C-terminus: Threonine--tRNA ligase (638 aa).

One can recognise a TGS domain in the interval 1–61 (MPVITLPDGS…SVDGKLQIIT (61 aa)). Residues 243-534 (DHRKIGKTQD…LTEEYAGFFP (292 aa)) form a catalytic region. Zn(2+)-binding residues include C334, H385, and H511.

This sequence belongs to the class-II aminoacyl-tRNA synthetase family. Homodimer. Zn(2+) serves as cofactor.

It is found in the cytoplasm. The enzyme catalyses tRNA(Thr) + L-threonine + ATP = L-threonyl-tRNA(Thr) + AMP + diphosphate + H(+). Functionally, catalyzes the attachment of threonine to tRNA(Thr) in a two-step reaction: L-threonine is first activated by ATP to form Thr-AMP and then transferred to the acceptor end of tRNA(Thr). Also edits incorrectly charged L-seryl-tRNA(Thr). This chain is Threonine--tRNA ligase, found in Hamiltonella defensa subsp. Acyrthosiphon pisum (strain 5AT).